Consider the following 380-residue polypeptide: Cytochrome b (380 aa).

Transmembrane regions (helical) follow at residues 34 to 54 (FGSL…LLAM), 78 to 99 (WLIR…YLHI), 114 to 134 (WNTG…GYVL), and 179 to 199 (FFAL…IHLT). The heme b site is built by His-84 and His-98. Residues His-183 and His-197 each contribute to the heme b site. Residue His-202 coordinates a ubiquinone. 4 helical membrane passes run 227–247 (TKDL…AMFS), 289–309 (LGGV…PFLH), 321–341 (LSQL…WVGS), and 348–368 (FIII…ILFP).

It belongs to the cytochrome b family. As to quaternary structure, the cytochrome bc1 complex contains 11 subunits: 3 respiratory subunits (MT-CYB, CYC1 and UQCRFS1), 2 core proteins (UQCRC1 and UQCRC2) and 6 low-molecular weight proteins (UQCRH/QCR6, UQCRB/QCR7, UQCRQ/QCR8, UQCR10/QCR9, UQCR11/QCR10 and a cleavage product of UQCRFS1). This cytochrome bc1 complex then forms a dimer. The cofactor is heme b.

The protein localises to the mitochondrion inner membrane. Functionally, component of the ubiquinol-cytochrome c reductase complex (complex III or cytochrome b-c1 complex) that is part of the mitochondrial respiratory chain. The b-c1 complex mediates electron transfer from ubiquinol to cytochrome c. Contributes to the generation of a proton gradient across the mitochondrial membrane that is then used for ATP synthesis. The protein is Cytochrome b (MT-CYB) of Amazilia tzacatl (Rufous-tailed hummingbird).